Consider the following 205-residue polypeptide: Mitotic spindle assembly checkpoint protein MAD2A (205 aa).

Alanine 2 is subject to N-acetylalanine. A phosphoserine mark is found at serine 6, serine 130, serine 170, serine 178, serine 185, and serine 195. Residues 14–197 form the HORMA domain; sequence RGSAEIVAEF…TTIHKVNSMV (184 aa). The segment at 195-205 is required for assuming the closed conformation and for interaction with CDC20; sequence SMVAYKIPVND.

It belongs to the MAD2 family. Monomer and homodimer. Heterodimerizes with MAD2L1 in order to form a tetrameric MAD1L1-MAD2L1 core complex. In the closed and open conformation, interacts with MAD1L1. Formation of a heterotetrameric core complex containing two molecules each of MAD1L1 and of MAD2L1 promotes binding of another molecule of MAD2L1 to each MAD2L1, resulting in a heterohexamer. Interacts with MAD2L1BP. Interacts with ADAM17/TACE. Interacts with CDC20. Dimeric MAD2L1 in the closed conformation interacts with CDC20. Monomeric MAD2L1 in the open conformation does not interact with CDC20. CDC20 competes with MAD1L1 for MAD2L1 binding. In the closed conformation, interacts with BUB1B. Interacts with TTK. Interacts with TPR. Binds to UBD (via ubiquitin-like 1 domain) during mitosis. Interacts with isoform 1 and isoform 2 of NEK2. Interacts with HSF1; this interaction occurs in mitosis. Interacts with isoform 3 of MAD1L1; this interaction leads to the cytoplasmic sequestration of MAD2L1. Phosphorylated on multiple serine residues. The level of phosphorylation varies during the cell cycle and is highest during mitosis. Phosphorylation abolishes interaction with MAD1L1 and reduces interaction with CDC20. Phosphorylated by NEK2.

It localises to the nucleus. The protein resides in the chromosome. It is found in the centromere. The protein localises to the kinetochore. Its subcellular location is the cytoplasm. It localises to the cytoskeleton. The protein resides in the spindle pole. In terms of biological role, component of the spindle-assembly checkpoint that prevents the onset of anaphase until all chromosomes are properly aligned at the metaphase plate. In the closed conformation (C-MAD2) forms a heterotetrameric complex with MAD1L1 at unattached kinetochores during prometaphase, the complex recruits open conformation molecules of MAD2L1 (O-MAD2) and then promotes the conversion of O-MAD2 to C-MAD2. Required for the execution of the mitotic checkpoint which monitors the process of kinetochore-spindle attachment and inhibits the activity of the anaphase promoting complex by sequestering CDC20 until all chromosomes are aligned at the metaphase plate. This Homo sapiens (Human) protein is Mitotic spindle assembly checkpoint protein MAD2A (MAD2L1).